The following is a 447-amino-acid chain: UDP-glycosyltransferase 79B10 (447 aa).

Residues S260, 319-321, 336-344, and 358-361 contribute to the UDP-alpha-D-glucose site; these read VQQ, HCGFGSMWE, and LADQ.

This sequence belongs to the UDP-glycosyltransferase family.

The sequence is that of UDP-glycosyltransferase 79B10 (UGT79B10) from Arabidopsis thaliana (Mouse-ear cress).